The primary structure comprises 320 residues: Lipoyl synthase (320 aa).

[4Fe-4S] cluster contacts are provided by C67, C72, C78, C93, C97, C100, and S307. Residues 79 to 296 (FNHGTATFMI…RDKANEMGFE (218 aa)) form the Radical SAM core domain.

The protein belongs to the radical SAM superfamily. Lipoyl synthase family. [4Fe-4S] cluster is required as a cofactor.

Its subcellular location is the cytoplasm. It carries out the reaction [[Fe-S] cluster scaffold protein carrying a second [4Fe-4S](2+) cluster] + N(6)-octanoyl-L-lysyl-[protein] + 2 oxidized [2Fe-2S]-[ferredoxin] + 2 S-adenosyl-L-methionine + 4 H(+) = [[Fe-S] cluster scaffold protein] + N(6)-[(R)-dihydrolipoyl]-L-lysyl-[protein] + 4 Fe(3+) + 2 hydrogen sulfide + 2 5'-deoxyadenosine + 2 L-methionine + 2 reduced [2Fe-2S]-[ferredoxin]. Its pathway is protein modification; protein lipoylation via endogenous pathway; protein N(6)-(lipoyl)lysine from octanoyl-[acyl-carrier-protein]: step 2/2. Functionally, catalyzes the radical-mediated insertion of two sulfur atoms into the C-6 and C-8 positions of the octanoyl moiety bound to the lipoyl domains of lipoate-dependent enzymes, thereby converting the octanoylated domains into lipoylated derivatives. In Haemophilus influenzae (strain ATCC 51907 / DSM 11121 / KW20 / Rd), this protein is Lipoyl synthase.